Consider the following 347-residue polypeptide: Protein RecA (347 aa).

67 to 74 lines the ATP pocket; that stretch reads GPESSGKT.

This sequence belongs to the RecA family.

It is found in the cytoplasm. Can catalyze the hydrolysis of ATP in the presence of single-stranded DNA, the ATP-dependent uptake of single-stranded DNA by duplex DNA, and the ATP-dependent hybridization of homologous single-stranded DNAs. It interacts with LexA causing its activation and leading to its autocatalytic cleavage. In Paenarthrobacter aurescens (strain TC1), this protein is Protein RecA.